The following is a 301-amino-acid chain: GTPase Era (301 aa).

Residues 4–173 (KAGFVALIGK…LECISEHLSP (170 aa)) form the Era-type G domain. The interval 12–19 (GKPNAGKS) is G1. GTP is bound at residue 12-19 (GKPNAGKS). The G2 stretch occupies residues 38–42 (NATRK). Residues 64-67 (DTPG) form a G3 region. GTP-binding positions include 64–68 (DTPGL) and 122–125 (SKID). The segment at 122 to 125 (SKID) is G4. The tract at residues 152–154 (LSA) is G5. Residues 204-280 (LSDEIPYESD…FLNLQVIAQK (77 aa)) enclose the KH type-2 domain.

This sequence belongs to the TRAFAC class TrmE-Era-EngA-EngB-Septin-like GTPase superfamily. Era GTPase family. In terms of assembly, monomer.

The protein resides in the cytoplasm. It is found in the cell inner membrane. An essential GTPase that binds both GDP and GTP, with rapid nucleotide exchange. Plays a role in 16S rRNA processing and 30S ribosomal subunit biogenesis and possibly also in cell cycle regulation and energy metabolism. This chain is GTPase Era, found in Helicobacter acinonychis (strain Sheeba).